We begin with the raw amino-acid sequence, 352 residues long: DNA polymerase IV (352 aa).

Residues 7–187 (IIHIDMDCFY…LSLKKIPGIG (181 aa)) enclose the UmuC domain. Mg(2+) is bound by residues D11 and D105. E106 is an active-site residue.

The protein belongs to the DNA polymerase type-Y family. In terms of assembly, monomer. The cofactor is Mg(2+).

It is found in the cytoplasm. It catalyses the reaction DNA(n) + a 2'-deoxyribonucleoside 5'-triphosphate = DNA(n+1) + diphosphate. In terms of biological role, poorly processive, error-prone DNA polymerase involved in untargeted mutagenesis. Copies undamaged DNA at stalled replication forks, which arise in vivo from mismatched or misaligned primer ends. These misaligned primers can be extended by PolIV. Exhibits no 3'-5' exonuclease (proofreading) activity. May be involved in translesional synthesis, in conjunction with the beta clamp from PolIII. The sequence is that of DNA polymerase IV from Colwellia psychrerythraea (strain 34H / ATCC BAA-681) (Vibrio psychroerythus).